The chain runs to 460 residues: ATP synthase subunit beta (460 aa).

149 to 156 (GGAGVGKT) contributes to the ATP binding site.

It belongs to the ATPase alpha/beta chains family. As to quaternary structure, F-type ATPases have 2 components, CF(1) - the catalytic core - and CF(0) - the membrane proton channel. CF(1) has five subunits: alpha(3), beta(3), gamma(1), delta(1), epsilon(1). CF(0) has three main subunits: a(1), b(2) and c(9-12). The alpha and beta chains form an alternating ring which encloses part of the gamma chain. CF(1) is attached to CF(0) by a central stalk formed by the gamma and epsilon chains, while a peripheral stalk is formed by the delta and b chains.

The protein localises to the cell membrane. It catalyses the reaction ATP + H2O + 4 H(+)(in) = ADP + phosphate + 5 H(+)(out). In terms of biological role, produces ATP from ADP in the presence of a proton gradient across the membrane. The catalytic sites are hosted primarily by the beta subunits. In Acholeplasma laidlawii (strain PG-8A), this protein is ATP synthase subunit beta.